A 359-amino-acid chain; its full sequence is MFDVFGSVKGLLKLDSVCIDNNLFRLHYKATVIILIAFSLLVTSRQYIGDPIDCIVDEIPLAVMDTYCWIYSTFTIPNRLNGKIGLEVAHPGVGAHVAGKDEVKYHKYYQWVCFVLFFQAILFYIPRYLWKTWEGGRIKMLVLDLNSPVVNEQSKADRKKLLVDYFATNLHTQNFYAYRFFICEALNFVNVVGQIYFMDLFLDGEFTTYGSDVVRFTEMEPEERSDPMSRVFPKVTKCTFHKYGPSGSVQTFDGLCVLPLNIVNEKIYVFLWFWFVILSVLTGIGLVYRLATAMGPQMRMYLLRARSRLAPQDQIETISNKCQIGDWFVLYQLGKNIDPLIYKELVADLAKKLEGKEIV.

Residues 1–22 (MFDVFGSVKGLLKLDSVCIDNN) lie on the Cytoplasmic side of the membrane. A helical transmembrane segment spans residues 23–43 (LFRLHYKATVIILIAFSLLVT). At 44–109 (SRQYIGDPID…KDEVKYHKYY (66 aa)) the chain is on the extracellular side. Residues 110–130 (QWVCFVLFFQAILFYIPRYLW) traverse the membrane as a helical segment. The Cytoplasmic portion of the chain corresponds to 131-180 (KTWEGGRIKMLVLDLNSPVVNEQSKADRKKLLVDYFATNLHTQNFYAYRF). Residues 181–201 (FICEALNFVNVVGQIYFMDLF) form a helical membrane-spanning segment. At 202–266 (LDGEFTTYGS…VLPLNIVNEK (65 aa)) the chain is on the extracellular side. The helical transmembrane segment at 267–287 (IYVFLWFWFVILSVLTGIGLV) threads the bilayer. At 288-359 (YRLATAMGPQ…AKKLEGKEIV (72 aa)) the chain is on the cytoplasmic side.

The protein belongs to the pannexin family. Widespread expression in embryo, in anterior and posterior row of neural precursors, midline precursors and in epithelial sheet of stomodeum.

It localises to the cell membrane. The protein localises to the cell junction. It is found in the gap junction. Its function is as follows. Structural components of the gap junctions. This Schistocerca americana (American grasshopper) protein is Innexin inx2 (inx2).